Consider the following 258-residue polypeptide: Ferredoxin--NADP reductase (258 aa).

The region spanning 2–102 (SNLNVERVLS…RKPTGTLVTS (101 aa)) is the FAD-binding FR-type domain. D17 is an NADP(+) binding site. Residues 51–54 (RAYS), 67–69 (FSI), 74–77 (GPLT), and T117 each bind FAD. Residues 144-145 (VR), 181-182 (TR), and R190 contribute to the NADP(+) site. Position 254-258 (254-258 (AFVEK)) interacts with FAD.

It belongs to the ferredoxin--NADP reductase type 1 family. In terms of assembly, monomer. FAD serves as cofactor.

The enzyme catalyses 2 reduced [2Fe-2S]-[ferredoxin] + NADP(+) + H(+) = 2 oxidized [2Fe-2S]-[ferredoxin] + NADPH. Functionally, transports electrons between ferredoxin and NADPH. This Azotobacter vinelandii protein is Ferredoxin--NADP reductase.